Consider the following 172-residue polypeptide: uncharacterized protein (172 aa).

The HotDog ACOT-type domain maps to 10 to 122; that stretch reads KESKVVKTSR…FLTFVALDSN (113 aa). The disordered stretch occupies residues 148–172; sequence RANERKNRKRHSQALANALGTDKPW.

This sequence belongs to the acyl coenzyme A hydrolase family.

This is an uncharacterized protein from Bacillus subtilis (strain 168).